A 47-amino-acid polypeptide reads, in one-letter code: Defensin-like protein 2 (47 aa).

Disulfide bonds link cysteine 3–cysteine 47, cysteine 14–cysteine 36, cysteine 20–cysteine 41, and cysteine 24–cysteine 43.

Belongs to the DEFL family.

This chain is Defensin-like protein 2, found in Zea mays (Maize).